Consider the following 610-residue polypeptide: tRNA uridine 5-carboxymethylaminomethyl modification enzyme MnmG (610 aa).

Residue 14–19 (GAGHAG) participates in FAD binding. 274–288 (GPRYCPSIEDKIVKF) lines the NAD(+) pocket.

Belongs to the MnmG family. Homodimer. Heterotetramer of two MnmE and two MnmG subunits. Requires FAD as cofactor.

The protein resides in the cytoplasm. Its function is as follows. NAD-binding protein involved in the addition of a carboxymethylaminomethyl (cmnm) group at the wobble position (U34) of certain tRNAs, forming tRNA-cmnm(5)s(2)U34. In Chlamydia trachomatis serovar D (strain ATCC VR-885 / DSM 19411 / UW-3/Cx), this protein is tRNA uridine 5-carboxymethylaminomethyl modification enzyme MnmG.